Reading from the N-terminus, the 210-residue chain is Thiamine-phosphate synthase (210 aa).

Residues 43-47 (QLREK) and Asn75 each bind 4-amino-2-methyl-5-(diphosphooxymethyl)pyrimidine. 2 residues coordinate Mg(2+): Asp76 and Asp95. Ser114 lines the 4-amino-2-methyl-5-(diphosphooxymethyl)pyrimidine pocket. Residue 140 to 142 (TST) coordinates 2-[(2R,5Z)-2-carboxy-4-methylthiazol-5(2H)-ylidene]ethyl phosphate. Position 143 (Lys143) interacts with 4-amino-2-methyl-5-(diphosphooxymethyl)pyrimidine. 2-[(2R,5Z)-2-carboxy-4-methylthiazol-5(2H)-ylidene]ethyl phosphate is bound by residues Gly170 and 190 to 191 (IS).

It belongs to the thiamine-phosphate synthase family. Mg(2+) is required as a cofactor.

The enzyme catalyses 2-[(2R,5Z)-2-carboxy-4-methylthiazol-5(2H)-ylidene]ethyl phosphate + 4-amino-2-methyl-5-(diphosphooxymethyl)pyrimidine + 2 H(+) = thiamine phosphate + CO2 + diphosphate. It catalyses the reaction 2-(2-carboxy-4-methylthiazol-5-yl)ethyl phosphate + 4-amino-2-methyl-5-(diphosphooxymethyl)pyrimidine + 2 H(+) = thiamine phosphate + CO2 + diphosphate. The catalysed reaction is 4-methyl-5-(2-phosphooxyethyl)-thiazole + 4-amino-2-methyl-5-(diphosphooxymethyl)pyrimidine + H(+) = thiamine phosphate + diphosphate. Its pathway is cofactor biosynthesis; thiamine diphosphate biosynthesis; thiamine phosphate from 4-amino-2-methyl-5-diphosphomethylpyrimidine and 4-methyl-5-(2-phosphoethyl)-thiazole: step 1/1. In terms of biological role, condenses 4-methyl-5-(beta-hydroxyethyl)thiazole monophosphate (THZ-P) and 2-methyl-4-amino-5-hydroxymethyl pyrimidine pyrophosphate (HMP-PP) to form thiamine monophosphate (TMP). This chain is Thiamine-phosphate synthase, found in Clostridioides difficile (strain 630) (Peptoclostridium difficile).